Reading from the N-terminus, the 464-residue chain is Mitogen-activated protein kinase 10 (464 aa).

In terms of domain architecture, Protein kinase spans 64-359 (YQNLKPIGSG…VDDALQHPYI (296 aa)). ATP contacts are provided by residues 70–78 (IGSGAQGIV) and K93. D189 serves as the catalytic Proton acceptor. At T221 the chain carries Phosphothreonine; by MAP2K7. The short motif at 221–223 (TPY) is the TXY element. Y223 carries the post-translational modification Phosphotyrosine; by MAP2K4. A disordered region spans residues 405–464 (TKNGVVKGQPSPSGAAVNSSESLPPSSSVNDISSMSTDQTLASDTDSSLEASAGPLGCCR). The span at 423–432 (SSESLPPSSS) shows a compositional bias: low complexity. Residues 433-454 (VNDISSMSTDQTLASDTDSSLE) are compositionally biased toward polar residues. S-palmitoyl cysteine attachment occurs at residues C462 and C463.

This sequence belongs to the protein kinase superfamily. CMGC Ser/Thr protein kinase family. MAP kinase subfamily. Interacts with MAPK8IP1/JIP-1 and MAPK8IP3/JIP-3/JSAP1. Interacts with SPAG9/MAPK8IP4/JIP4. Interacts with HDAC9 and MAPKBP1. Interacts with ARRB2; the interaction enhances MAPK10 activation by MAP3K5. Interacts with SARM1. Interacts with JUND; interaction is inhibited in the presence of MEN1. Requires Mg(2+) as cofactor. Dually phosphorylated on Thr-221 and Tyr-223 by MAP2K4 and MAP2K7, which activates the enzyme. MAP2K7 shows a strong preference for Thr-221 while MAP2K4 phosphorylates Tyr-223 preferentially. Weakly autophosphorylated on threonine and tyrosine residues in vitro. Post-translationally, palmitoylation regulates subcellular location and axonal development.

The protein localises to the cytoplasm. It is found in the membrane. Its subcellular location is the nucleus. The protein resides in the mitochondrion. It carries out the reaction L-seryl-[protein] + ATP = O-phospho-L-seryl-[protein] + ADP + H(+). It catalyses the reaction L-threonyl-[protein] + ATP = O-phospho-L-threonyl-[protein] + ADP + H(+). Its activity is regulated as follows. Activated by threonine and tyrosine phosphorylation by two dual specificity kinases, MAP2K4 and MAP2K7. MAP2K7 phosphorylates MAPK10 on Thr-221 causing a conformational change and a large increase in Vmax for the enzyme. MAP2K4 then phosphorylates Tyr-223 resulting in a further increase in Vmax. Inhibited by dual specificity phosphatases, such as DUSP1. Inhibited by HDAC9. Its function is as follows. Serine/threonine-protein kinase involved in various processes such as neuronal proliferation, differentiation, migration and programmed cell death. Extracellular stimuli such as pro-inflammatory cytokines or physical stress stimulate the stress-activated protein kinase/c-Jun N-terminal kinase (SAP/JNK) signaling pathway. In this cascade, two dual specificity kinases MAP2K4/MKK4 and MAP2K7/MKK7 phosphorylate and activate MAPK10/JNK3. In turn, MAPK10/JNK3 phosphorylates a number of transcription factors, primarily components of AP-1 such as JUN and ATF2 and thus regulates AP-1 transcriptional activity. Plays regulatory roles in the signaling pathways during neuronal apoptosis. Phosphorylates the neuronal microtubule regulator STMN2. Acts in the regulation of the amyloid-beta precursor protein/APP signaling during neuronal differentiation by phosphorylating APP. Also participates in neurite growth in spiral ganglion neurons. Phosphorylates the CLOCK-BMAL1 heterodimer and plays a role in the photic regulation of the circadian clock. Phosphorylates JUND and this phosphorylation is inhibited in the presence of MEN1. The polypeptide is Mitogen-activated protein kinase 10 (Mapk10) (Rattus norvegicus (Rat)).